A 129-amino-acid chain; its full sequence is UPF0102 protein Clim_0016 (129 aa).

It belongs to the UPF0102 family.

This chain is UPF0102 protein Clim_0016, found in Chlorobium limicola (strain DSM 245 / NBRC 103803 / 6330).